A 378-amino-acid chain; its full sequence is uncharacterized protein (378 aa).

Residues 208–317 (GIGFADLSSF…NPVNLAARLV (110 aa)) enclose the Guanylate cyclase domain.

This sequence belongs to the adenylyl cyclase class-4/guanylyl cyclase family.

This is an uncharacterized protein from Mycobacterium bovis (strain ATCC BAA-935 / AF2122/97).